The primary structure comprises 184 residues: dTTP/UTP pyrophosphatase (184 aa).

The active-site Proton acceptor is the aspartate 65.

It belongs to the Maf family. YhdE subfamily. Requires a divalent metal cation as cofactor.

It localises to the cytoplasm. It carries out the reaction dTTP + H2O = dTMP + diphosphate + H(+). It catalyses the reaction UTP + H2O = UMP + diphosphate + H(+). Nucleoside triphosphate pyrophosphatase that hydrolyzes dTTP and UTP. May have a dual role in cell division arrest and in preventing the incorporation of modified nucleotides into cellular nucleic acids. This chain is dTTP/UTP pyrophosphatase, found in Thermococcus onnurineus (strain NA1).